We begin with the raw amino-acid sequence, 155 residues long: Ribonuclease H (155 aa).

The region spanning 1–142 (MLKQVEIFTD…CDELARAAAM (142 aa)) is the RNase H type-1 domain. Asp-10, Glu-48, Asp-70, and Asp-134 together coordinate Mg(2+).

It belongs to the RNase H family. In terms of assembly, monomer. It depends on Mg(2+) as a cofactor.

It is found in the cytoplasm. It carries out the reaction Endonucleolytic cleavage to 5'-phosphomonoester.. Its function is as follows. Endonuclease that specifically degrades the RNA of RNA-DNA hybrids. The protein is Ribonuclease H of Salmonella paratyphi A (strain AKU_12601).